A 664-amino-acid chain; its full sequence is Bifunctional 3-dehydroquinate synthase/phosphatase (664 aa).

Residues 1 to 352 (MKKIFDDIYV…KIIDKYKNNF (352 aa)) form a 3-dehydroquinate synthase region. NAD(+)-binding positions include 61–66 (DGEEYK), 95–99 (GVICD), 119–120 (TS), lysine 132, lysine 141, and 159–162 (FLKT). Residues glutamate 174, histidine 238, and histidine 255 each coordinate Zn(2+). Residues 353-664 (LRASIDIGTN…GAILEGVENK (312 aa)) are GPPA/PPX.

This sequence in the N-terminal section; belongs to the sugar phosphate cyclases superfamily. Dehydroquinate synthase family. In the C-terminal section; belongs to the GppA/Ppx family. As to quaternary structure, monomer. It depends on NAD(+) as a cofactor. Co(2+) serves as cofactor. The cofactor is Zn(2+).

It localises to the cytoplasm. The enzyme catalyses 7-phospho-2-dehydro-3-deoxy-D-arabino-heptonate = 3-dehydroquinate + phosphate. Its pathway is metabolic intermediate biosynthesis; chorismate biosynthesis; chorismate from D-erythrose 4-phosphate and phosphoenolpyruvate: step 2/7. In Fusobacterium nucleatum subsp. nucleatum (strain ATCC 25586 / DSM 15643 / BCRC 10681 / CIP 101130 / JCM 8532 / KCTC 2640 / LMG 13131 / VPI 4355), this protein is Bifunctional 3-dehydroquinate synthase/phosphatase (aroB).